The primary structure comprises 290 residues: Sodium/potassium-transporting ATPase subunit beta-2 (290 aa).

Residues 1 to 39 are Cytoplasmic-facing; the sequence is MVIQKEKKSCGQVVEEWKEFVWNPRTHQFMGRTGTSWAF. A helical; Signal-anchor for type II membrane protein transmembrane segment spans residues 40-67; it reads ILLFYLVFYGFLTAMFTLTMWVMLQTVS. The Extracellular portion of the chain corresponds to 68-290; that stretch reads DHTPKYQDRL…VAFKLRINKA (223 aa). N-linked (GlcNAc...) asparagine glycans are attached at residues asparagine 96 and asparagine 118. A disulfide bridge connects residues cysteine 129 and cysteine 150. Asparagine 153 and asparagine 159 each carry an N-linked (GlcNAc...) asparagine glycan. Cysteines 160 and 177 form a disulfide. N-linked (GlcNAc...) asparagine glycosylation is found at asparagine 193, asparagine 197, and asparagine 238. An immunoglobulin-like region spans residues 193–290; sequence NQSMNVTCVG…VAFKLRINKA (98 aa). An intrachain disulfide couples cysteine 200 to cysteine 261.

It belongs to the X(+)/potassium ATPases subunit beta family. In terms of assembly, the sodium/potassium-transporting ATPase is composed of a catalytic alpha subunit, an auxiliary non-catalytic beta subunit and an additional regulatory subunit. Interacts with isoform 2 of BSG. Highly expressed in brain (at protein level).

The protein localises to the cell membrane. Its function is as follows. This is the non-catalytic component of the active enzyme, which catalyzes the hydrolysis of ATP coupled with the exchange of Na(+) and K(+) ions across the plasma membrane. The exact function of the beta-2 subunit is not known. In terms of biological role, mediates cell adhesion of neurons and astrocytes, and promotes neurite outgrowth. The sequence is that of Sodium/potassium-transporting ATPase subunit beta-2 (Atp1b2) from Rattus norvegicus (Rat).